Here is a 407-residue protein sequence, read N- to C-terminus: Imidazolonepropionase (407 aa).

Fe(3+) is bound by residues histidine 74 and histidine 76. Residues histidine 74 and histidine 76 each coordinate Zn(2+). Residues arginine 83, tyrosine 146, and histidine 179 each contribute to the 4-imidazolone-5-propanoate site. Residue tyrosine 146 coordinates N-formimidoyl-L-glutamate. Histidine 244 is a binding site for Fe(3+). Histidine 244 provides a ligand contact to Zn(2+). Residue glutamine 247 coordinates 4-imidazolone-5-propanoate. Aspartate 319 serves as a coordination point for Fe(3+). Aspartate 319 serves as a coordination point for Zn(2+). Positions 321 and 323 each coordinate N-formimidoyl-L-glutamate. Threonine 324 contributes to the 4-imidazolone-5-propanoate binding site.

The protein belongs to the metallo-dependent hydrolases superfamily. HutI family. Zn(2+) serves as cofactor. It depends on Fe(3+) as a cofactor.

Its subcellular location is the cytoplasm. The enzyme catalyses 4-imidazolone-5-propanoate + H2O = N-formimidoyl-L-glutamate. The protein operates within amino-acid degradation; L-histidine degradation into L-glutamate; N-formimidoyl-L-glutamate from L-histidine: step 3/3. Catalyzes the hydrolytic cleavage of the carbon-nitrogen bond in imidazolone-5-propanoate to yield N-formimidoyl-L-glutamate. It is the third step in the universal histidine degradation pathway. This Salmonella paratyphi A (strain ATCC 9150 / SARB42) protein is Imidazolonepropionase.